We begin with the raw amino-acid sequence, 326 residues long: Probable cell division protein WhiA (326 aa).

Residues 275-308 constitute a DNA-binding region (H-T-H motif); sequence SLDELGHHADPPMTKDAVAGRIRRLLAMADKKAV.

This sequence belongs to the WhiA family.

Involved in cell division and chromosome segregation. This chain is Probable cell division protein WhiA, found in Clavibacter sepedonicus (Clavibacter michiganensis subsp. sepedonicus).